We begin with the raw amino-acid sequence, 271 residues long: uncharacterized protein (271 aa).

Belongs to the HAD-like hydrolase superfamily.

This is an uncharacterized protein from Staphylococcus aureus (strain Mu50 / ATCC 700699).